An 862-amino-acid polypeptide reads, in one-letter code: Cadherin-related family member 5 (862 aa).

Residues 1 to 28 form the signal peptide; the sequence is MGAPALLWPPLLLPLLTVLFGHLPGTLA. Residues 29–671 lie on the Extracellular side of the membrane; the sequence is QAQVCSANQT…GQRFSTVDMA (643 aa). N-linked (GlcNAc...) asparagine glycosylation is found at N36, N45, N135, N173, N201, N311, N408, N438, and N479. Cadherin domains follow at residues 40–127, 128–240, 252–357, and 358–462; these read FTMN…APEF, PFTI…TPWF, IQAQ…PLQF, and SQSL…PPST. A disordered region spans residues 452 to 658; the sequence is IQVSEREPPS…TTGPISGVGE (207 aa). Low complexity predominate over residues 461–500; that stretch reads STESPTPPEAGGTTGPSSNTTLETPSTSGTSQGPATTSSG. Positions 529–652 are enriched in polar residues; sequence LGISTSPQTA…GTSQPTTTGP (124 aa). A run of 3 repeats spans residues 545 to 575, 576 to 606, and 607 to 636. Residues 545-648 are 4 X 31 AA approximate tandem repeats; the sequence is TQTPKPGTSQ…TPKPGTSQPT (104 aa). The stretch at 637–648 is one 4; truncated repeat; the sequence is TQTPKPGTSQPT. The helical transmembrane segment at 672 to 692 threads the bilayer; sequence VLGGVLGALLLLALIFLIILI. Residues 693–862 lie on the Cytoplasmic side of the membrane; sequence HKHYRHRFTC…LGAVADNTYV (170 aa). Positions 693-862 are mediates interaction with USH1C and MYO7B and is required for proper localization to microvilli tips and function in microvilli organization; the sequence is HKHYRHRFTC…LGAVADNTYV (170 aa). Disordered stretches follow at residues 706-803 and 821-862; these read KAKE…EGGY and LNEP…NTYV. Phosphoserine is present on residues S729, S751, and S755. Positions 739-768 are enriched in pro residues; the sequence is GPEPVQPPLRPPSPMSSSPTPPSSMPPSPQ. T758 carries the post-translational modification Phosphothreonine. Residues S766 and S783 each carry the phosphoserine modification. A compositionally biased stretch (basic and acidic residues) spans 791–801; sequence LTKERRPEGEG. T825 bears the Phosphothreonine mark. The segment covering 827–837 has biased composition (low complexity); sequence DVDSASASGSE. 3 positions are modified to phosphoserine: S832, S834, and S836.

In terms of assembly, part of the IMAC/intermicrovillar adhesion complex/intermicrovillar tip-link complex composed of ANKS4B, MYO7B, USH1C, CDHR2 and CDHR5. Interacts (via cytoplasmic domain) with USH1C and MYO7B; required for proper localization of CDHR5 to microvilli tips and its function in brush border differentiation. In terms of processing, N- and O-glycosylated. As to expression, expressed predominantly in kidney. Also detected in lung and small intestine.

Its subcellular location is the apical cell membrane. The protein resides in the cell projection. The protein localises to the microvillus membrane. In terms of biological role, intermicrovillar adhesion molecule that forms, via its extracellular domain, calcium-dependent heterophilic complexes with CDHR2 on adjacent microvilli. Thereby, controls the packing of microvilli at the apical membrane of epithelial cells. Through its cytoplasmic domain, interacts with microvillus cytoplasmic proteins to form the intermicrovillar adhesion complex/IMAC. This complex plays a central role in microvilli and epithelial brush border differentiation. This Rattus norvegicus (Rat) protein is Cadherin-related family member 5.